We begin with the raw amino-acid sequence, 332 residues long: Biotin synthase (332 aa).

The 231-residue stretch at 53–283 (WGKGGVHACS…VHPRKTIKFA (231 aa)) folds into the Radical SAM core domain. Positions 71, 75, and 78 each coordinate [4Fe-4S] cluster. Positions 150, 211, and 281 each coordinate [2Fe-2S] cluster.

Belongs to the radical SAM superfamily. Biotin synthase family. In terms of assembly, homodimer. The cofactor is [4Fe-4S] cluster. [2Fe-2S] cluster serves as cofactor.

It carries out the reaction (4R,5S)-dethiobiotin + (sulfur carrier)-SH + 2 reduced [2Fe-2S]-[ferredoxin] + 2 S-adenosyl-L-methionine = (sulfur carrier)-H + biotin + 2 5'-deoxyadenosine + 2 L-methionine + 2 oxidized [2Fe-2S]-[ferredoxin]. Its pathway is cofactor biosynthesis; biotin biosynthesis; biotin from 7,8-diaminononanoate: step 2/2. In terms of biological role, catalyzes the conversion of dethiobiotin (DTB) to biotin by the insertion of a sulfur atom into dethiobiotin via a radical-based mechanism. This chain is Biotin synthase, found in Chlorobium luteolum (strain DSM 273 / BCRC 81028 / 2530) (Pelodictyon luteolum).